We begin with the raw amino-acid sequence, 1358 residues long: DNA-directed RNA polymerase subunit beta (1358 aa).

This sequence belongs to the RNA polymerase beta chain family. The RNAP catalytic core consists of 2 alpha, 1 beta, 1 beta' and 1 omega subunit. When a sigma factor is associated with the core the holoenzyme is formed, which can initiate transcription.

It catalyses the reaction RNA(n) + a ribonucleoside 5'-triphosphate = RNA(n+1) + diphosphate. Functionally, DNA-dependent RNA polymerase catalyzes the transcription of DNA into RNA using the four ribonucleoside triphosphates as substrates. The polypeptide is DNA-directed RNA polymerase subunit beta (Neorickettsia sennetsu (strain ATCC VR-367 / Miyayama) (Ehrlichia sennetsu)).